The following is a 146-amino-acid chain: Hemoglobin subunit beta (146 aa).

N-acetylvaline is present on Val1. The 145-residue stretch at 2-146 (HLTGEEKAAV…VANALAHKYH (145 aa)) folds into the Globin domain. A Phosphothreonine modification is found at Thr12. Ser44 is subject to Phosphoserine. Lys59 is subject to N6-acetyllysine. Position 63 (His63) interacts with heme b. Lys82 bears the N6-acetyllysine mark. His92 contributes to the heme b binding site. An S-nitrosocysteine modification is found at Cys93. Lys144 bears the N6-acetyllysine mark.

The protein belongs to the globin family. As to quaternary structure, heterotetramer of two alpha chains and two beta chains. Red blood cells.

Functionally, involved in oxygen transport from the lung to the various peripheral tissues. The sequence is that of Hemoglobin subunit beta (HBB) from Lutra lutra (European river otter).